The chain runs to 206 residues: N-(5'-phosphoribosyl)anthranilate isomerase (206 aa).

Belongs to the TrpF family.

It carries out the reaction N-(5-phospho-beta-D-ribosyl)anthranilate = 1-(2-carboxyphenylamino)-1-deoxy-D-ribulose 5-phosphate. Its pathway is amino-acid biosynthesis; L-tryptophan biosynthesis; L-tryptophan from chorismate: step 3/5. The sequence is that of N-(5'-phosphoribosyl)anthranilate isomerase from Pseudomonas putida (strain ATCC 47054 / DSM 6125 / CFBP 8728 / NCIMB 11950 / KT2440).